The primary structure comprises 260 residues: Snake venom serine protease homolog KN7 (260 aa).

Residues 1–18 (MVLIRVLANLLILQLSYA) form the signal peptide. The propeptide occupies 19–24 (QKSSEL). Positions 25–251 (IIGGDECNIN…HLDWIKSIIA (227 aa)) constitute a Peptidase S1 domain. Disulfide bonds link Cys-31–Cys-165, Cys-52–Cys-68, Cys-100–Cys-258, Cys-144–Cys-212, Cys-176–Cys-191, and Cys-202–Cys-227. N-linked (GlcNAc...) asparagine glycans are attached at residues Asn-83, Asn-123, and Asn-124.

This sequence belongs to the peptidase S1 family. Snake venom subfamily. Expressed by the venom gland.

The protein localises to the secreted. Snake venom serine protease homolog that may act in the hemostasis system of the prey. This chain is Snake venom serine protease homolog KN7, found in Trimeresurus stejnegeri (Chinese green tree viper).